Here is a 95-residue protein sequence, read N- to C-terminus: MSKKKGFWSSLFGTDDSNAGSANMATERLKVIVASENRLNNRLTADRIEKMKREILEVVNKYVNGVQIDDVNINHRSEDSLDVLEMNINLPEHKK.

This sequence belongs to the MinE family.

In terms of biological role, prevents the cell division inhibition by proteins MinC and MinD at internal division sites while permitting inhibition at polar sites. This ensures cell division at the proper site by restricting the formation of a division septum at the midpoint of the long axis of the cell. This Psychrobacter cryohalolentis (strain ATCC BAA-1226 / DSM 17306 / VKM B-2378 / K5) protein is Cell division topological specificity factor.